A 33-amino-acid polypeptide reads, in one-letter code: MSDIN-like toxin proprotein 1 (33 aa).

The propeptide occupies 1–10 (MSDINATRLP). The cyclopeptide (Ile-Pro) cross-link spans 11-18 (IIWAPVVP). Positions 19–33 (CISDDNDSTLTRGQR) are excised as a propeptide.

It belongs to the MSDIN fungal toxin family. Processed by the macrocyclase-peptidase enzyme POPB to yield a toxic cyclic octapeptide. POPB first removes 10 residues from the N-terminus. Conformational trapping of the remaining peptide forces the enzyme to release this intermediate rather than proceed to macrocyclization. The enzyme rebinds the remaining peptide in a different conformation and catalyzes macrocyclization of the N-terminal 8 residues.

In terms of biological role, probable toxin that belongs to the MSDIN-like toxin family responsible for a large number of food poisoning cases and deaths. The polypeptide is MSDIN-like toxin proprotein 1 (Amanita fuliginea (East Asian brown death cap)).